Here is a 316-residue protein sequence, read N- to C-terminus: Olfactory receptor 1N2 (316 aa).

The Extracellular segment spans residues 1-28 (MGKPGRVNQTTVSDFLLLGLSEWPEEQP). A glycan (N-linked (GlcNAc...) asparagine) is linked at N8. Residues 29 to 49 (LLFGIFLGMYLVTMVGNLLII) traverse the membrane as a helical segment. Over 50–60 (LAISSDPHLHT) the chain is Cytoplasmic. A helical membrane pass occupies residues 61–81 (PMYFFLANLSLTDACFTSASI). Residues 82-100 (PKMLANIHTQSQIISYSGC) are Extracellular-facing. C100 and C182 are oxidised to a cystine. A helical transmembrane segment spans residues 101 to 121 (LAQLYFLLMFGGLDNCLLAVM). Over 122–145 (AYDRYVAICQPLHYSTSMSPQLCA) the chain is Cytoplasmic. The helical transmembrane segment at 146–166 (LMLGVCWVLTNCPALMHTLLL) threads the bilayer. The Extracellular segment spans residues 167–199 (TRVAFCAQKAIPHFYCDPSALLKLACSDTHVNE). The helical transmembrane segment at 200 to 220 (LMIITMGLLFLTVPLLLIVFS) threads the bilayer. The Cytoplasmic segment spans residues 221-243 (YVRIFWAVFVISSPGGRWKAFST). A helical transmembrane segment spans residues 244-264 (CGSHLTVVLLFYGSLMGVYLL). Residues 265-274 (PPSTYSTERE) lie on the Extracellular side of the membrane. A helical membrane pass occupies residues 275–295 (SRAAVLYMVIIPTLNPFIYSL). Residues 296–316 (RNRDMKEALGKLFVSGKTFFL) lie on the Cytoplasmic side of the membrane.

The protein belongs to the G-protein coupled receptor 1 family.

The protein resides in the membrane. In terms of biological role, odorant receptor. This is Olfactory receptor 1N2 (OR1N2) from Homo sapiens (Human).